The chain runs to 194 residues: Ribonuclease HII (194 aa).

Positions 3 to 193 (ILTAGVDEAG…VRNLLAQQAL (191 aa)) constitute an RNase H type-2 domain. Residues Asp-9, Glu-10, and Asp-101 each contribute to the a divalent metal cation site.

Belongs to the RNase HII family. The cofactor is Mn(2+). Requires Mg(2+) as cofactor.

It localises to the cytoplasm. It carries out the reaction Endonucleolytic cleavage to 5'-phosphomonoester.. Endonuclease that specifically degrades the RNA of RNA-DNA hybrids. The chain is Ribonuclease HII from Neisseria gonorrhoeae (strain ATCC 700825 / FA 1090).